Consider the following 130-residue polypeptide: Small ribosomal subunit protein uS8 (130 aa).

The protein belongs to the universal ribosomal protein uS8 family. Part of the 30S ribosomal subunit. Contacts proteins S5 and S12.

One of the primary rRNA binding proteins, it binds directly to 16S rRNA central domain where it helps coordinate assembly of the platform of the 30S subunit. The protein is Small ribosomal subunit protein uS8 of Glaesserella parasuis serovar 5 (strain SH0165) (Haemophilus parasuis).